Reading from the N-terminus, the 373-residue chain is COP9 signalosome complex subunit 5 (373 aa).

One can recognise an MPN domain in the interval 66–201 (CLISRLATTK…IGAFRTLPSK (136 aa)). Residues histidine 147, histidine 149, and aspartate 160 each contribute to the Zn(2+) site. Residues 147–160 (HSHPGYGCWLSNID) carry the JAMM motif motif. Residues 289–325 (FTHERSNSISSTSSLTTRHTTDVEMDDQESAQSSLDI) are disordered. A compositionally biased stretch (low complexity) spans 295–306 (NSISSTSSLTTR).

It belongs to the peptidase M67A family. CSN5 subfamily. In terms of assembly, component of the COP9 signalosome (CSN) complex.

It is found in the cytoplasm. It localises to the nucleus. Its function is as follows. Catalytic Component of the COP9 signalosome (CSN) complex that acts as an regulator of the ubiquitin (Ubl) conjugation pathway by mediating the deneddylation of the cullin subunit of SCF-type E3 ubiquitin-protein ligase complexes. The CNS complex is involved in the regulation of the mating pheromone response. In Kluyveromyces lactis (strain ATCC 8585 / CBS 2359 / DSM 70799 / NBRC 1267 / NRRL Y-1140 / WM37) (Yeast), this protein is COP9 signalosome complex subunit 5 (RRI1).